Reading from the N-terminus, the 529-residue chain is Alkaline phosphatase, germ cell type (529 aa).

The signal sequence occupies residues 1-18; it reads MWGACLLLLGLSLQVCPS. Mg(2+) is bound at residue D60. The Zn(2+) site is built by D60 and S110. Catalysis depends on S110, which acts as the Phosphoserine intermediate. A disulfide bond links C139 and C201. N140 is a glycosylation site (N-linked (GlcNAc...) asparagine). Residue S173 coordinates Mg(2+). E234 is a binding site for Ca(2+). 2 N-linked (GlcNAc...) asparagine glycosylation sites follow: N267 and N277. Residues F287, E288, and D303 each contribute to the Ca(2+) site. Residue E329 coordinates Mg(2+). 5 residues coordinate Zn(2+): D334, H338, D375, H376, and H450. A disulfide bridge links C485 with C492. S502 is lipidated: GPI-anchor amidated serine. Residues 503 to 529 constitute a propeptide, removed in mature form; it reads AVSPGYMSTLLCLLAGKMLMLMAAAEP.

It belongs to the alkaline phosphatase family. In terms of assembly, homodimer. The cofactor is Mg(2+). Zn(2+) is required as a cofactor. It depends on Ca(2+) as a cofactor. As to expression, embryo and testis.

It is found in the cell membrane. It carries out the reaction a phosphate monoester + H2O = an alcohol + phosphate. Its activity is regulated as follows. Inhibited by L-leucine, EDTA and heat. Functionally, alkaline phosphatase that can hydrolyze various phosphate compounds. This Mus musculus (Mouse) protein is Alkaline phosphatase, germ cell type (Alpg).